A 200-amino-acid polypeptide reads, in one-letter code: Putative protein ATXN8OS (200 aa).

The segment at 19–39 (PFSGLKEEEEEDGEDDEEEEE) is disordered. Acidic residues predominate over residues 25 to 39 (EEEEEDGEDDEEEEE).

In terms of tissue distribution, expressed in brain. Expressed in muscle tissues (at protein level).

It is found in the cytoplasm. In Homo sapiens (Human), this protein is Putative protein ATXN8OS.